Reading from the N-terminus, the 248-residue chain is 23S rRNA (guanosine-2'-O-)-methyltransferase RlmB (248 aa).

S-adenosyl-L-methionine-binding residues include glycine 198, leucine 218, and leucine 227.

Belongs to the class IV-like SAM-binding methyltransferase superfamily. RNA methyltransferase TrmH family. RlmB subfamily.

Its subcellular location is the cytoplasm. The enzyme catalyses guanosine(2251) in 23S rRNA + S-adenosyl-L-methionine = 2'-O-methylguanosine(2251) in 23S rRNA + S-adenosyl-L-homocysteine + H(+). Functionally, specifically methylates the ribose of guanosine 2251 in 23S rRNA. This Pseudomonas putida (strain ATCC 47054 / DSM 6125 / CFBP 8728 / NCIMB 11950 / KT2440) protein is 23S rRNA (guanosine-2'-O-)-methyltransferase RlmB.